The chain runs to 398 residues: Galactose-3-O-sulfotransferase 2 (398 aa).

Topologically, residues 1 to 11 (MLSALGGLQRC) are cytoplasmic. A helical; Signal-anchor for type II membrane protein transmembrane segment spans residues 12–29 (FWAILLLALTVSLLAGFL). Residues 30–398 (HKDVRLLMPL…PPKNIPFLGA (369 aa)) are Lumenal-facing. Asn77, Asn133, Asn180, Asn288, Asn330, and Asn360 each carry an N-linked (GlcNAc...) asparagine glycan.

This sequence belongs to the galactose-3-O-sulfotransferase family.

Its subcellular location is the golgi apparatus. It is found in the golgi stack membrane. It participates in protein modification; carbohydrate sulfation. Strongly inhibited by Cu(2+) and Zn(2+). Functionally, transfers a sulfate group to the hydroxyl group at C3 of non-reducing beta-galactosyl residues. Acts both on type 1 (Gal-beta-1,3-GlcNAc) and type 2 (Gal-beta-1,4-GlcNAc) chains with similar efficiency. The protein is Galactose-3-O-sulfotransferase 2 (GAL3ST2) of Sus scrofa (Pig).